The chain runs to 364 residues: MSTTLLSAFYDIDLLYKNEKALNNLALSTMLDKKAVGSPVSSTNSNLFPGFLRRHSATNLQALSGSTNLAKFCPNNNNNPLKDPAVSSTALLNRENKFRDRSFSENGERSQHLLHLQQQQQQQKAGAQVNSTRYKTELCRPFEENGACKYGEKCQFAHGFHELRSLTRHPKYKTELCRTFHTIGFCPYGPRCHFIHNAEERRQAPGAGERPKLHHSLSFSGFPNHSLDSPLLESPTSRTPPPQSSGSLYCQELLQLNNNNPCANNAFTFSGQELGLIAPLAIHTQNQSYCRQPCSSPPLSFQPLRRVSESPVFDAPPSPPDSLSDRDSYLSGSLSSGSLSGSDSPTLDSNRRLPIFSRLSISDD.

Basic and acidic residues predominate over residues serine 102–glutamine 111. The tract at residues serine 102–valine 129 is disordered. Over residues leucine 113–glutamine 123 the composition is skewed to low complexity. The RNA-binding motif lies at arginine 133 to leucine 138. C3H1-type zinc fingers lie at residues arginine 133–histidine 161 and lysine 171–glutamate 199. The interval tyrosine 150–arginine 191 is RNA-binding. Residues serine 308–asparagine 350 form a disordered region. Residues tyrosine 329–aspartate 348 show a composition bias toward low complexity.

Post-translationally, phosphorylated. Remains unlocalized in the egg and early embryo. From stage 21 (late neurula), expressed around the pronephros in the anterior crests, pharyngeal arch, hindbrain, mesodermal tissues around the pronephros and tail-bud. This expression pattern is maintained up to the tadpole stage.

The protein localises to the nucleus. It is found in the cytoplasm. Functionally, zinc-finger RNA-binding protein that destabilizes several cytoplasmic AU-rich element (ARE)-containing mRNA transcripts by promoting their poly(A) tail removal or deadenylation, and hence provide a mechanism for attenuating protein synthesis. Acts as a 3'-untranslated region (UTR) ARE mRNA-binding adapter protein to communicate signaling events to the mRNA decay machinery. Functions by recruiting the CCR4-NOT deadenylase complex and probably other components of the cytoplasmic RNA decay machinery to the bound ARE-containing mRNAs, and hence promotes ARE-mediated mRNA deadenylation and decay processes. Binds to 3'-UTR ARE of numerous mRNAs. Also induces the degradation of ARE-containing mRNAs even in absence of poly(A) tail. Required for tubulogenesis during pronephros development. The polypeptide is mRNA decay activator protein ZFP36L2-B (zfp36l2-B) (Xenopus laevis (African clawed frog)).